The primary structure comprises 271 residues: ABC transporter I family member 10 (271 aa).

The 228-residue stretch at 40 to 267 (VECRNLCFSV…IKAKQSSYID (228 aa)) folds into the ABC transporter domain. Position 77–84 (77–84 (GPNGCGKS)) interacts with ATP.

This sequence belongs to the ABC transporter superfamily. ABCI family.

This chain is ABC transporter I family member 10 (ABCI10), found in Arabidopsis thaliana (Mouse-ear cress).